We begin with the raw amino-acid sequence, 142 residues long: Large ribosomal subunit protein uL13 (142 aa).

The protein belongs to the universal ribosomal protein uL13 family. As to quaternary structure, part of the 50S ribosomal subunit.

Functionally, this protein is one of the early assembly proteins of the 50S ribosomal subunit, although it is not seen to bind rRNA by itself. It is important during the early stages of 50S assembly. The chain is Large ribosomal subunit protein uL13 from Baumannia cicadellinicola subsp. Homalodisca coagulata.